Consider the following 68-residue polypeptide: Serine palmitoyltransferase small subunit A (68 aa).

The Cytoplasmic segment spans residues 1-9; sequence MALARAWKQ. A helical membrane pass occupies residues 10–26; it reads MSWFYYQYLLVTALYML. Topologically, residues 27–31 are lumenal; it reads EPWER. The chain crosses the membrane as a helical span at residues 32–54; that stretch reads TVFNSMLVSIVGMALYTGYVFMP. The Cytoplasmic segment spans residues 55 to 68; the sequence is QHIMAILHYFEIVQ.

This sequence belongs to the SPTSS family. SPTSSA subfamily. In terms of assembly, component of the serine palmitoyltransferase (SPT) complex, which is composed of SPTLC1, SPTLC2 or SPTLC3 and SPTSSA or SPTSSB. The heterodimer consisting of SPTLC1 and SPTLC2/SPTLC3 forms the catalytic core of the enzyme, while SPTSSA or SPTSSB subunits determine substrate specificity. SPT also interacts with ORMDL proteins, especially ORMDL3, which negatively regulate SPT activity in the presence of ceramides. Interacts with MBOAT7; the interaction plays a role in MBOAT7 localization to mitochondria-associated membranes.

It is found in the endoplasmic reticulum membrane. It functions in the pathway lipid metabolism; sphingolipid metabolism. Its function is as follows. Component of the serine palmitoyltransferase multisubunit enzyme (SPT) that catalyzes the initial and rate-limiting step in sphingolipid biosynthesis by condensing L-serine and activated acyl-CoA (most commonly palmitoyl-CoA) to form long-chain bases. The SPT complex is composed of SPTLC1, SPTLC2 or SPTLC3 and SPTSSA or SPTSSB. Within this complex, the heterodimer consisting of SPTLC1 and SPTLC2/SPTLC3 forms the catalytic core. Within the SPT complex, SPTSSA stimulates the catalytic activity and plays a role in substrate specificity, which depends upon the overall complex composition. The SPTLC1-SPTLC2-SPTSSA complex shows a strong preference for C16-CoA substrate, while the SPTLC1-SPTLC3-SPTSSA isozyme uses both C14-CoA and C16-CoA as substrates, with a slight preference for C14-CoA. Independently of its action as a SPT component, may be involved in MBOAT7 localization to mitochondria-associated membranes, a membrane bridge between the endoplasmic reticulum and mitochondria, may hence affect MBOAT7-catalyzed incorporation of arachidonic acid into phosphatidylinositol. The protein is Serine palmitoyltransferase small subunit A (SPTSSA) of Bos taurus (Bovine).